A 287-amino-acid polypeptide reads, in one-letter code: Phosphatidylserine decarboxylase proenzyme (287 aa).

Residues D90, H147, and S253 each act as charge relay system; for autoendoproteolytic cleavage activity in the active site. S253 serves as the catalytic Schiff-base intermediate with substrate; via pyruvic acid; for decarboxylase activity. The residue at position 253 (S253) is a Pyruvic acid (Ser); by autocatalysis.

Belongs to the phosphatidylserine decarboxylase family. PSD-B subfamily. Prokaryotic type I sub-subfamily. As to quaternary structure, heterodimer of a large membrane-associated beta subunit and a small pyruvoyl-containing alpha subunit. Pyruvate serves as cofactor. In terms of processing, is synthesized initially as an inactive proenzyme. Formation of the active enzyme involves a self-maturation process in which the active site pyruvoyl group is generated from an internal serine residue via an autocatalytic post-translational modification. Two non-identical subunits are generated from the proenzyme in this reaction, and the pyruvate is formed at the N-terminus of the alpha chain, which is derived from the carboxyl end of the proenzyme. The autoendoproteolytic cleavage occurs by a canonical serine protease mechanism, in which the side chain hydroxyl group of the serine supplies its oxygen atom to form the C-terminus of the beta chain, while the remainder of the serine residue undergoes an oxidative deamination to produce ammonia and the pyruvoyl prosthetic group on the alpha chain. During this reaction, the Ser that is part of the protease active site of the proenzyme becomes the pyruvoyl prosthetic group, which constitutes an essential element of the active site of the mature decarboxylase.

It localises to the cell membrane. It carries out the reaction a 1,2-diacyl-sn-glycero-3-phospho-L-serine + H(+) = a 1,2-diacyl-sn-glycero-3-phosphoethanolamine + CO2. Its pathway is phospholipid metabolism; phosphatidylethanolamine biosynthesis; phosphatidylethanolamine from CDP-diacylglycerol: step 2/2. Functionally, catalyzes the formation of phosphatidylethanolamine (PtdEtn) from phosphatidylserine (PtdSer). This Aliivibrio fischeri (strain MJ11) (Vibrio fischeri) protein is Phosphatidylserine decarboxylase proenzyme.